The following is a 231-amino-acid chain: Large ribosomal subunit protein uL1 (231 aa).

This sequence belongs to the universal ribosomal protein uL1 family. As to quaternary structure, part of the 50S ribosomal subunit.

In terms of biological role, binds directly to 23S rRNA. The L1 stalk is quite mobile in the ribosome, and is involved in E site tRNA release. Functionally, protein L1 is also a translational repressor protein, it controls the translation of the L11 operon by binding to its mRNA. The protein is Large ribosomal subunit protein uL1 of Janthinobacterium sp. (strain Marseille) (Minibacterium massiliensis).